The chain runs to 156 residues: ATP synthase subunit b (156 aa).

Residues 7–27 traverse the membrane as a helical segment; sequence LIGQLIAFALFVAFCMKFVWP.

Belongs to the ATPase B chain family. In terms of assembly, F-type ATPases have 2 components, F(1) - the catalytic core - and F(0) - the membrane proton channel. F(1) has five subunits: alpha(3), beta(3), gamma(1), delta(1), epsilon(1). F(0) has three main subunits: a(1), b(2) and c(10-14). The alpha and beta chains form an alternating ring which encloses part of the gamma chain. F(1) is attached to F(0) by a central stalk formed by the gamma and epsilon chains, while a peripheral stalk is formed by the delta and b chains.

It is found in the cell inner membrane. F(1)F(0) ATP synthase produces ATP from ADP in the presence of a proton or sodium gradient. F-type ATPases consist of two structural domains, F(1) containing the extramembraneous catalytic core and F(0) containing the membrane proton channel, linked together by a central stalk and a peripheral stalk. During catalysis, ATP synthesis in the catalytic domain of F(1) is coupled via a rotary mechanism of the central stalk subunits to proton translocation. Functionally, component of the F(0) channel, it forms part of the peripheral stalk, linking F(1) to F(0). This Actinobacillus pleuropneumoniae serotype 5b (strain L20) protein is ATP synthase subunit b.